A 345-amino-acid chain; its full sequence is Transcription initiation factor IIB (345 aa).

The TFIIB-type zinc finger occupies 20–53 (IVLTCPECKVYPPKIVERFSEGDVVCALCGLVLS). Cys24, Cys27, Cys45, and Cys48 together coordinate Zn(2+). The segment covering 65–78 (TFSNDDHNGDDPSR) has biased composition (basic and acidic residues). The disordered stretch occupies residues 65–93 (TFSNDDHNGDDPSRVGEASNPLLDGNNLS). 2 consecutive repeat copies span residues 136–212 (LCDA…IMKN) and 242–318 (FCSH…ILYE).

It belongs to the TFIIB family. In terms of assembly, associates with TFIID-IIA (DA complex) to form TFIID-IIA-IIB (DAB-complex) which is then recognized by polymerase II.

It localises to the nucleus. Functionally, general factor that plays a major role in the activation of eukaryotic genes transcribed by RNA polymerase II. This Saccharomyces cerevisiae (strain ATCC 204508 / S288c) (Baker's yeast) protein is Transcription initiation factor IIB (SUA7).